Here is a 250-residue protein sequence, read N- to C-terminus: Acetylglutamate kinase (250 aa).

Substrate is bound by residues 41–42 (GG), Arg63, and Asn156.

It belongs to the acetylglutamate kinase family. ArgB subfamily.

The protein resides in the cytoplasm. It carries out the reaction N-acetyl-L-glutamate + ATP = N-acetyl-L-glutamyl 5-phosphate + ADP. It participates in amino-acid biosynthesis; L-arginine biosynthesis; N(2)-acetyl-L-ornithine from L-glutamate: step 2/4. In terms of biological role, catalyzes the ATP-dependent phosphorylation of N-acetyl-L-glutamate. This Listeria monocytogenes serotype 4b (strain CLIP80459) protein is Acetylglutamate kinase.